A 63-amino-acid chain; its full sequence is Large ribosomal subunit protein uL29 (63 aa).

Belongs to the universal ribosomal protein uL29 family.

This chain is Large ribosomal subunit protein uL29, found in Yersinia pseudotuberculosis serotype O:1b (strain IP 31758).